The sequence spans 418 residues: Multidrug resistance protein MdtG (418 aa).

11 helical membrane-spanning segments follow: residues 19 to 39 (IGCF…PLYV), 56 to 76 (LVFS…GGLA), 90 to 110 (LGMA…QFLI), 113 to 133 (ALLG…ATQI), 144 to 164 (TLST…GVLA), 171 to 191 (PVFF…LLFI), 222 to 242 (LFVT…ILTL), 251 to 271 (VANI…AALI), 288 to 308 (ILIA…FVQT), 317 to 337 (FLLG…LVYN), and 376 to 396 (AVFL…GLSL).

This sequence belongs to the major facilitator superfamily. DHA1 family. MdtG (TC 2.A.1.2.20) subfamily.

The protein resides in the cell inner membrane. This is Multidrug resistance protein MdtG from Enterobacter lignolyticus (strain SCF1).